The following is a 276-amino-acid chain: Pantothenate synthetase (276 aa).

Residue 27 to 34 (MGALHKGH) participates in ATP binding. The active-site Proton donor is the His-34. A (R)-pantoate-binding site is contributed by Gln-58. Residue Gln-58 participates in beta-alanine binding. 147 to 150 (GKKD) is a binding site for ATP. Gln-153 serves as a coordination point for (R)-pantoate. ATP-binding positions include Val-176 and 184–187 (LSSR).

This sequence belongs to the pantothenate synthetase family. Homodimer.

Its subcellular location is the cytoplasm. The catalysed reaction is (R)-pantoate + beta-alanine + ATP = (R)-pantothenate + AMP + diphosphate + H(+). The protein operates within cofactor biosynthesis; (R)-pantothenate biosynthesis; (R)-pantothenate from (R)-pantoate and beta-alanine: step 1/1. In terms of biological role, catalyzes the condensation of pantoate with beta-alanine in an ATP-dependent reaction via a pantoyl-adenylate intermediate. In Helicobacter pylori (strain ATCC 700392 / 26695) (Campylobacter pylori), this protein is Pantothenate synthetase.